The sequence spans 505 residues: MFS efflux pump atnC (505 aa).

12 helical membrane passes run 48 to 68, 117 to 137, 148 to 168, 181 to 201, 216 to 236, 240 to 260, 304 to 324, 343 to 363, 377 to 399, 403 to 425, 439 to 459, and 469 to 489; these read VLQV…GLTV, LIGW…IPYG, VLLL…LVCW, LFQC…ATIA, LQAT…VLMA, WTPC…LIAL, VAGL…LDFL, LSLR…LLLF, LLIA…LSPT, AILV…ASLW, TVAI…SLMY, and WVGL…GVLL.

Belongs to the major facilitator superfamily.

It localises to the membrane. It functions in the pathway secondary metabolite biosynthesis. Functionally, MFS efflux pump; part of the gene cluster that mediates the biosynthesis of aspercryptins, linear lipopeptides built from six amino acids including 2 highly unusual and nonproteogenic amino acids, 2-amino-octanoic acid (2aoa) and 2-amino-dodecanol (2adol). The protein is MFS efflux pump atnC of Emericella nidulans (strain FGSC A4 / ATCC 38163 / CBS 112.46 / NRRL 194 / M139) (Aspergillus nidulans).